Consider the following 76-residue polypeptide: DNA-directed RNA polymerase subunit epsilon (76 aa).

The protein belongs to the RNA polymerase subunit epsilon family. RNAP is composed of a core of 2 alpha, a beta and a beta' subunit. The core is associated with a delta subunit, and at least one of epsilon or omega. When a sigma factor is associated with the core the holoenzyme is formed, which can initiate transcription.

The enzyme catalyses RNA(n) + a ribonucleoside 5'-triphosphate = RNA(n+1) + diphosphate. Functionally, a non-essential component of RNA polymerase (RNAP). In Streptococcus thermophilus (strain CNRZ 1066), this protein is DNA-directed RNA polymerase subunit epsilon.